Here is a 302-residue protein sequence, read N- to C-terminus: Tyrosine recombinase XerC (302 aa).

Positions 6 to 90 (DLEVTCLQDY…AIKQWGEFLL (85 aa)) constitute a Core-binding (CB) domain. Residues 111–290 (PLPKNMDVDS…DFQHLAKVYD (180 aa)) enclose the Tyr recombinase domain. Catalysis depends on residues Arg-150, Lys-174, His-242, Arg-245, and His-268. Tyr-277 serves as the catalytic O-(3'-phospho-DNA)-tyrosine intermediate.

Belongs to the 'phage' integrase family. XerC subfamily. Forms a cyclic heterotetrameric complex composed of two molecules of XerC and two molecules of XerD.

The protein resides in the cytoplasm. Site-specific tyrosine recombinase, which acts by catalyzing the cutting and rejoining of the recombining DNA molecules. The XerC-XerD complex is essential to convert dimers of the bacterial chromosome into monomers to permit their segregation at cell division. It also contributes to the segregational stability of plasmids. The polypeptide is Tyrosine recombinase XerC (Shewanella putrefaciens (strain CN-32 / ATCC BAA-453)).